We begin with the raw amino-acid sequence, 888 residues long: Alanine--tRNA ligase (888 aa).

Positions 564, 568, 676, and 680 each coordinate Zn(2+).

This sequence belongs to the class-II aminoacyl-tRNA synthetase family. It depends on Zn(2+) as a cofactor.

It localises to the cytoplasm. It carries out the reaction tRNA(Ala) + L-alanine + ATP = L-alanyl-tRNA(Ala) + AMP + diphosphate. Its function is as follows. Catalyzes the attachment of alanine to tRNA(Ala) in a two-step reaction: alanine is first activated by ATP to form Ala-AMP and then transferred to the acceptor end of tRNA(Ala). Also edits incorrectly charged Ser-tRNA(Ala) and Gly-tRNA(Ala) via its editing domain. This is Alanine--tRNA ligase from Bartonella tribocorum (strain CIP 105476 / IBS 506).